A 79-amino-acid chain; its full sequence is Exodeoxyribonuclease 7 small subunit (79 aa).

This sequence belongs to the XseB family. In terms of assembly, heterooligomer composed of large and small subunits.

The protein localises to the cytoplasm. It catalyses the reaction Exonucleolytic cleavage in either 5'- to 3'- or 3'- to 5'-direction to yield nucleoside 5'-phosphates.. Its function is as follows. Bidirectionally degrades single-stranded DNA into large acid-insoluble oligonucleotides, which are then degraded further into small acid-soluble oligonucleotides. The chain is Exodeoxyribonuclease 7 small subunit from Dechloromonas aromatica (strain RCB).